Consider the following 391-residue polypeptide: Heme A synthase (391 aa).

8 consecutive transmembrane segments (helical) span residues 37-57 (IRLW…VGGL), 121-141 (RQLG…FLVA), 152-172 (LLAL…MVAS), 186-206 (LAVH…QALL), 229-249 (TTVL…VAGI), 298-318 (FLHR…WIFG), 332-352 (LLAL…LSAA), and 354-374 (WQVA…ILHA). His300 is a binding site for heme. His360 contacts heme.

This sequence belongs to the COX15/CtaA family. Type 2 subfamily. In terms of assembly, interacts with CtaB. Heme b serves as cofactor.

The protein localises to the cell membrane. The enzyme catalyses Fe(II)-heme o + 2 A + H2O = Fe(II)-heme a + 2 AH2. The protein operates within porphyrin-containing compound metabolism; heme A biosynthesis; heme A from heme O: step 1/1. Catalyzes the conversion of heme O to heme A by two successive hydroxylations of the methyl group at C8. The first hydroxylation forms heme I, the second hydroxylation results in an unstable dihydroxymethyl group, which spontaneously dehydrates, resulting in the formyl group of heme A. The protein is Heme A synthase of Cereibacter sphaeroides (strain ATCC 17025 / ATH 2.4.3) (Rhodobacter sphaeroides).